We begin with the raw amino-acid sequence, 368 residues long: Divinyl chlorophyll a/b light-harvesting protein PcbA (368 aa).

Helical transmembrane passes span 27-47, 63-83, 89-109, 203-223, 243-263, and 307-327; these read FIAS…ANTL, GFVV…NGVI, MLVV…GAML, VMGG…WHIF, FVLS…AFWA, and LSNF…WHGL.

Belongs to the PsbB/PsbC family. IsiA/Pcb subfamily. As to quaternary structure, the antenna complex consists of divinyl chlorophylls (a and b) and divinyl chlorophyll a/b binding proteins. Forms complexes with PSII, consisting of a PSII dimer and 4 or 8 PcbA subunits. These complexes are also found under conditions of iron-starvation. It depends on divinyl chlorophyll a as a cofactor. Requires divinyl chlorophyll b as cofactor.

The protein resides in the cellular thylakoid membrane. The antenna complex functions as a light receptor, it captures and delivers excitation energy to photosystems II. The Prochlorales pcb genes are not related to higher plant LHCs. The chain is Divinyl chlorophyll a/b light-harvesting protein PcbA (pcbA) from Prochlorococcus marinus (strain MIT 9313).